We begin with the raw amino-acid sequence, 372 residues long: Chaperone protein DnaJ (372 aa).

Residues 5–69 (DYYEVLGLTK…QKKARYDQFG (65 aa)) form the J domain. The CR-type zinc-finger motif lies at 129–211 (GKETEIEIPK…CRGEGKVQKR (83 aa)). Positions 142, 145, 159, 162, 185, 188, 199, and 202 each coordinate Zn(2+). CXXCXGXG motif repeat units follow at residues 142–149 (CETCHGSG), 159–166 (CSTCNGAG), 185–192 (CTTCHGTG), and 199–206 (CSTCRGEG).

Belongs to the DnaJ family. Homodimer. Zn(2+) serves as cofactor.

Its subcellular location is the cytoplasm. Functionally, participates actively in the response to hyperosmotic and heat shock by preventing the aggregation of stress-denatured proteins and by disaggregating proteins, also in an autonomous, DnaK-independent fashion. Unfolded proteins bind initially to DnaJ; upon interaction with the DnaJ-bound protein, DnaK hydrolyzes its bound ATP, resulting in the formation of a stable complex. GrpE releases ADP from DnaK; ATP binding to DnaK triggers the release of the substrate protein, thus completing the reaction cycle. Several rounds of ATP-dependent interactions between DnaJ, DnaK and GrpE are required for fully efficient folding. Also involved, together with DnaK and GrpE, in the DNA replication of plasmids through activation of initiation proteins. This Lysinibacillus sphaericus (strain C3-41) protein is Chaperone protein DnaJ.